Reading from the N-terminus, the 420-residue chain is Coiled-coil domain-containing protein 85C (420 aa).

Alanine 2 carries the post-translational modification N-acetylalanine. 2 coiled-coil regions span residues 26 to 92 (ELLR…RELC) and 122 to 165 (HEVA…LAAA). The tract at residues 165 to 271 (AGGAGGGGGG…NGLHDPSSTY (107 aa)) is disordered. Residues 166–176 (GGAGGGGGGAG) are compositionally biased toward gly residues. Residue serine 179 is modified to Phosphoserine. A compositionally biased stretch (low complexity) spans 185-212 (ASLSGPLAGSAAGSGARDVGDGSSTSSA). The residue at position 247 (serine 247) is a Phosphoserine.

It belongs to the CCDC85 family. May interact with ARVCF, CTNND1, CTNND2 and PKP4. In terms of tissue distribution, predominantly expressed on the surface of the lateral ventricular walls of the developing cerebral cortex.

It is found in the cell junction. The protein resides in the tight junction. It localises to the adherens junction. Functionally, may play a role in cell-cell adhesion and epithelium development through its interaction with proteins of the beta-catenin family. May play an important role in cortical development, especially in the maintenance of radial glia. The sequence is that of Coiled-coil domain-containing protein 85C (Ccdc85c) from Mus musculus (Mouse).